Reading from the N-terminus, the 35-residue chain is Photosystem II reaction center protein T (35 aa).

Residues 3–23 form a helical membrane-spanning segment; it reads ALVYTFLLXSTLGIIFFAIFF.

It belongs to the PsbT family. In terms of assembly, PSII is composed of 1 copy each of membrane proteins PsbA, PsbB, PsbC, PsbD, PsbE, PsbF, PsbH, PsbI, PsbJ, PsbK, PsbL, PsbM, PsbT, PsbY, PsbZ, Psb30/Ycf12, at least 3 peripheral proteins of the oxygen-evolving complex and a large number of cofactors. It forms dimeric complexes.

The protein localises to the plastid. It is found in the chloroplast thylakoid membrane. Functionally, found at the monomer-monomer interface of the photosystem II (PS II) dimer, plays a role in assembly and dimerization of PSII. PSII is a light-driven water plastoquinone oxidoreductase, using light energy to abstract electrons from H(2)O, generating a proton gradient subsequently used for ATP formation. In Cunninghamia lanceolata (China fir), this protein is Photosystem II reaction center protein T.